The sequence spans 208 residues: MSRYLGSVCKLCRREKEKLFLKGERCSSNCALNRKRGKNSPGQHGASKVKMSDYAKHLREKQKARRMYGLTEEQFSNYYKTAEKMKGSAGDNLLKLLELRLDNVVYRLGLASSKKMARQIVNHGNILVNEKKIDVPRYRLKIGDVITFPEKYKSNVIIKKLIEKMVSSIPAWLSFDKSRIAGTVVSEPLAGETSHPINSQLIVEYYSK.

A disordered region spans residues 32 to 53 (LNRKRGKNSPGQHGASKVKMSD). Residues 99–161 (LRLDNVVYRL…YKSNVIIKKL (63 aa)) enclose the S4 RNA-binding domain.

This sequence belongs to the universal ribosomal protein uS4 family. Part of the 30S ribosomal subunit. Contacts protein S5. The interaction surface between S4 and S5 is involved in control of translational fidelity.

One of the primary rRNA binding proteins, it binds directly to 16S rRNA where it nucleates assembly of the body of the 30S subunit. Functionally, with S5 and S12 plays an important role in translational accuracy. The polypeptide is Small ribosomal subunit protein uS4 (Endomicrobium trichonymphae).